A 287-amino-acid chain; its full sequence is ATP synthase gamma chain (287 aa).

The protein belongs to the ATPase gamma chain family. In terms of assembly, F-type ATPases have 2 components, CF(1) - the catalytic core - and CF(0) - the membrane proton channel. CF(1) has five subunits: alpha(3), beta(3), gamma(1), delta(1), epsilon(1). CF(0) has three main subunits: a, b and c.

The protein localises to the cell inner membrane. Its function is as follows. Produces ATP from ADP in the presence of a proton gradient across the membrane. The gamma chain is believed to be important in regulating ATPase activity and the flow of protons through the CF(0) complex. This chain is ATP synthase gamma chain, found in Hahella chejuensis (strain KCTC 2396).